The chain runs to 691 residues: DNA ligase (691 aa).

NAD(+) is bound by residues 53–57 (DSEYD), 102–103 (SL), and E135. K137 acts as the N6-AMP-lysine intermediate in catalysis. Residues R158, E195, K310, and K334 each contribute to the NAD(+) site. Zn(2+) contacts are provided by C428, C431, C446, and C452. Residues 613–691 (SEGLPLDGQT…EEEFLALVGE (79 aa)) enclose the BRCT domain.

This sequence belongs to the NAD-dependent DNA ligase family. LigA subfamily. Mg(2+) serves as cofactor. The cofactor is Mn(2+).

The enzyme catalyses NAD(+) + (deoxyribonucleotide)n-3'-hydroxyl + 5'-phospho-(deoxyribonucleotide)m = (deoxyribonucleotide)n+m + AMP + beta-nicotinamide D-nucleotide.. Functionally, DNA ligase that catalyzes the formation of phosphodiester linkages between 5'-phosphoryl and 3'-hydroxyl groups in double-stranded DNA using NAD as a coenzyme and as the energy source for the reaction. It is essential for DNA replication and repair of damaged DNA. This chain is DNA ligase, found in Psychrobacter arcticus (strain DSM 17307 / VKM B-2377 / 273-4).